The chain runs to 446 residues: Glutamyl-tRNA reductase (446 aa).

Substrate-binding positions include 49 to 52, Ser-109, 114 to 116, and Gln-120; these read TCNR and ETQ. Cys-50 functions as the Nucleophile in the catalytic mechanism. Position 189-194 (189-194) interacts with NADP(+); that stretch reads GAGKMG.

It belongs to the glutamyl-tRNA reductase family. In terms of assembly, homodimer.

It catalyses the reaction (S)-4-amino-5-oxopentanoate + tRNA(Glu) + NADP(+) = L-glutamyl-tRNA(Glu) + NADPH + H(+). It functions in the pathway porphyrin-containing compound metabolism; protoporphyrin-IX biosynthesis; 5-aminolevulinate from L-glutamyl-tRNA(Glu): step 1/2. Catalyzes the NADPH-dependent reduction of glutamyl-tRNA(Glu) to glutamate 1-semialdehyde (GSA). This is Glutamyl-tRNA reductase from Priestia megaterium (Bacillus megaterium).